An 830-amino-acid polypeptide reads, in one-letter code: Leucine--tRNA ligase (830 aa).

The short motif at 34–44 is the 'HIGH' region element; it reads PYPSGNIHMGH. The short motif at 592 to 596 is the 'KMSKS' region element; sequence KMSKS. Lysine 595 lines the ATP pocket.

Belongs to the class-I aminoacyl-tRNA synthetase family.

It localises to the cytoplasm. The catalysed reaction is tRNA(Leu) + L-leucine + ATP = L-leucyl-tRNA(Leu) + AMP + diphosphate. This Ehrlichia ruminantium (strain Gardel) protein is Leucine--tRNA ligase.